The sequence spans 260 residues: Zinc finger protein 575 (260 aa).

A disordered region spans residues 22-81; sequence PGLGPGRWLLPGAHQPSCPPAPHQGPLQKPSQSAPGPTASASAPPRPRRRPPPQRPHRCP. Low complexity predominate over residues 51–64; it reads PSQSAPGPTASASA. Residues 67–78 are compositionally biased toward basic residues; the sequence is RPRRRPPPQRPH. C2H2-type zinc fingers lie at residues 78-100, 106-128, 134-156, 162-184, 192-214, and 228-255; these read HRCP…RLAH, HPCP…RLTH, HPCP…LWTH, YPCP…RHTH, YPCP…RLCH, and HRCS…QVEH.

The protein belongs to the krueppel C2H2-type zinc-finger protein family.

It is found in the nucleus. Its function is as follows. May be involved in transcriptional regulation. This is Zinc finger protein 575 (ZNF575) from Macaca fascicularis (Crab-eating macaque).